The chain runs to 375 residues: Nicotinate-nucleotide--dimethylbenzimidazole phosphoribosyltransferase (375 aa).

The active-site Proton acceptor is the glutamate 323. The segment at 344–375 (LPEKPEELEAGEGPEAAEESSPEPENPEALAE) is disordered. Acidic residues predominate over residues 351–375 (LEAGEGPEAAEESSPEPENPEALAE).

Belongs to the CobT family.

The catalysed reaction is 5,6-dimethylbenzimidazole + nicotinate beta-D-ribonucleotide = alpha-ribazole 5'-phosphate + nicotinate + H(+). It functions in the pathway nucleoside biosynthesis; alpha-ribazole biosynthesis; alpha-ribazole from 5,6-dimethylbenzimidazole: step 1/2. Catalyzes the synthesis of alpha-ribazole-5'-phosphate from nicotinate mononucleotide (NAMN) and 5,6-dimethylbenzimidazole (DMB). The polypeptide is Nicotinate-nucleotide--dimethylbenzimidazole phosphoribosyltransferase (Streptomyces avermitilis (strain ATCC 31267 / DSM 46492 / JCM 5070 / NBRC 14893 / NCIMB 12804 / NRRL 8165 / MA-4680)).